We begin with the raw amino-acid sequence, 313 residues long: Ribosomal RNA small subunit methyltransferase H (313 aa).

S-adenosyl-L-methionine contacts are provided by residues 34–36 (GGH), Asp54, Phe81, Asp102, and Gln109. Positions 289 to 313 (IAGPEETDRNPRARSAKLRAAEKLG) are disordered.

This sequence belongs to the methyltransferase superfamily. RsmH family.

The protein resides in the cytoplasm. It carries out the reaction cytidine(1402) in 16S rRNA + S-adenosyl-L-methionine = N(4)-methylcytidine(1402) in 16S rRNA + S-adenosyl-L-homocysteine + H(+). Its function is as follows. Specifically methylates the N4 position of cytidine in position 1402 (C1402) of 16S rRNA. The chain is Ribosomal RNA small subunit methyltransferase H from Trichlorobacter lovleyi (strain ATCC BAA-1151 / DSM 17278 / SZ) (Geobacter lovleyi).